We begin with the raw amino-acid sequence, 416 residues long: Serine hydroxymethyltransferase (416 aa).

(6S)-5,6,7,8-tetrahydrofolate-binding positions include Leu-118 and 122-124; that span reads GHL. Lys-226 is modified (N6-(pyridoxal phosphate)lysine). (6S)-5,6,7,8-tetrahydrofolate contacts are provided by residues Glu-242 and 350–352; that span reads SPF.

This sequence belongs to the SHMT family. In terms of assembly, homodimer. It depends on pyridoxal 5'-phosphate as a cofactor.

Its subcellular location is the cytoplasm. It carries out the reaction (6R)-5,10-methylene-5,6,7,8-tetrahydrofolate + glycine + H2O = (6S)-5,6,7,8-tetrahydrofolate + L-serine. Its pathway is one-carbon metabolism; tetrahydrofolate interconversion. The protein operates within amino-acid biosynthesis; glycine biosynthesis; glycine from L-serine: step 1/1. Functionally, catalyzes the reversible interconversion of serine and glycine with tetrahydrofolate (THF) serving as the one-carbon carrier. This reaction serves as the major source of one-carbon groups required for the biosynthesis of purines, thymidylate, methionine, and other important biomolecules. Also exhibits THF-independent aldolase activity toward beta-hydroxyamino acids, producing glycine and aldehydes, via a retro-aldol mechanism. The chain is Serine hydroxymethyltransferase from Wolinella succinogenes (strain ATCC 29543 / DSM 1740 / CCUG 13145 / JCM 31913 / LMG 7466 / NCTC 11488 / FDC 602W) (Vibrio succinogenes).